We begin with the raw amino-acid sequence, 161 residues long: Peptidyl-prolyl cis-trans isomerase 10 (161 aa).

Residues 1-153 (MSVTLHTTSG…VQQKIQNVTI (153 aa)) enclose the PPIase cyclophilin-type domain.

Belongs to the cyclophilin-type PPIase family. PPIL3 subfamily.

It catalyses the reaction [protein]-peptidylproline (omega=180) = [protein]-peptidylproline (omega=0). Functionally, PPIases accelerate the folding of proteins. It catalyzes the cis-trans isomerization of proline imidic peptide bonds in oligopeptides. The polypeptide is Peptidyl-prolyl cis-trans isomerase 10 (cyn-10) (Caenorhabditis elegans).